A 337-amino-acid polypeptide reads, in one-letter code: Anthraniloyl-CoA anthraniloyltransferase (337 aa).

Anthraniloyl-CoA contacts are provided by threonine 29 and phenylalanine 33. Cysteine 113 acts as the Acyl-thioester intermediate in catalysis. Residues 154–155 (RN), 221–224 (MRGR), and histidine 258 each bind anthraniloyl-CoA.

It belongs to the thiolase-like superfamily. FabH family. Homodimer.

It localises to the cytoplasm. It catalyses the reaction anthraniloyl-CoA + malonyl-CoA + H(+) = (2-aminobenzoyl)acetyl-CoA + CO2 + CoA. Functionally, required for the biosynthesis of a number of signaling molecules, such as the quinolone signal 2-heptyl-3-hydroxy-4(1H)-quinolone (PQS), 2-heptyl-4-hydroxyquinoline (HHQ) and 2,4-dihydroxyquinoline (DHQ). These molecules are required for normal biofilm formation. Catalyzes the transfer of the anthraniloyl moiety from anthraniloyl-CoA to malonyl-CoA to form 2-aminobenzoylacetyl-CoA. The first step of the reaction is the formation of a covalent anthraniloyl-PqsD intermediate. Next, the short-lived intermediate 3-(2-aminophenyl)-3-oxopropanoyl-CoA is formed. An intramolecular rearrangement of this intermediate can give rise to 2,4-dihydroxyquinoline (DHQ). In Pseudomonas aeruginosa (strain ATCC 15692 / DSM 22644 / CIP 104116 / JCM 14847 / LMG 12228 / 1C / PRS 101 / PAO1), this protein is Anthraniloyl-CoA anthraniloyltransferase (pqsD).